The primary structure comprises 248 residues: Peptidyl-tRNA hydrolase (248 aa).

Tyrosine 14 contributes to the tRNA binding site. Histidine 19 acts as the Proton acceptor in catalysis. 3 residues coordinate tRNA: phenylalanine 64, asparagine 66, and asparagine 112. The disordered stretch occupies residues 190–248 (PRSSTGEASKGRKKAQKSEPGVAKTPAKAATPEAPAAGDIPAAPEDSRSPMQKLLDKFK). Residues 212 to 226 (AKTPAKAATPEAPAA) are compositionally biased toward low complexity.

Belongs to the PTH family. In terms of assembly, monomer.

It localises to the cytoplasm. The enzyme catalyses an N-acyl-L-alpha-aminoacyl-tRNA + H2O = an N-acyl-L-amino acid + a tRNA + H(+). Its function is as follows. Hydrolyzes ribosome-free peptidyl-tRNAs (with 1 or more amino acids incorporated), which drop off the ribosome during protein synthesis, or as a result of ribosome stalling. In terms of biological role, catalyzes the release of premature peptidyl moieties from peptidyl-tRNA molecules trapped in stalled 50S ribosomal subunits, and thus maintains levels of free tRNAs and 50S ribosomes. The chain is Peptidyl-tRNA hydrolase from Ruegeria sp. (strain TM1040) (Silicibacter sp.).